The chain runs to 301 residues: Protoheme IX farnesyltransferase (301 aa).

8 helical membrane-spanning segments follow: residues 30 to 50, 55 to 75, 106 to 126, 127 to 147, 152 to 172, 177 to 197, 233 to 253, and 281 to 301; these read VISL…PKAI, IIVS…GGMI, AYAI…LANP, LTAL…SIWL, WWNI…GFAA, FTLL…GHFW, ALMV…YLIV, and FKLS…VKLI.

This sequence belongs to the UbiA prenyltransferase family. Protoheme IX farnesyltransferase subfamily.

The protein resides in the cell membrane. The catalysed reaction is heme b + (2E,6E)-farnesyl diphosphate + H2O = Fe(II)-heme o + diphosphate. The protein operates within porphyrin-containing compound metabolism; heme O biosynthesis; heme O from protoheme: step 1/1. Its function is as follows. Converts heme B (protoheme IX) to heme O by substitution of the vinyl group on carbon 2 of heme B porphyrin ring with a hydroxyethyl farnesyl side group. This is Protoheme IX farnesyltransferase from Sulfurisphaera tokodaii (strain DSM 16993 / JCM 10545 / NBRC 100140 / 7) (Sulfolobus tokodaii).